The following is a 300-amino-acid chain: Small ribosomal subunit protein uS4m (300 aa).

In terms of domain architecture, S4 RNA-binding spans 146-209 (KRVDMVLLRS…MKRKLLKRLK (64 aa)).

This sequence belongs to the universal ribosomal protein uS4 family.

It localises to the mitochondrion. The chain is Small ribosomal subunit protein uS4m (mrps4) from Dictyostelium discoideum (Social amoeba).